A 299-amino-acid polypeptide reads, in one-letter code: Oxygen-dependent coproporphyrinogen-III oxidase (299 aa).

Position 92 (Ser92) interacts with substrate. A divalent metal cation contacts are provided by His96 and His106. Residue His106 is the Proton donor of the active site. A substrate-binding site is contributed by 108–110; sequence NVR. Residues His145 and His175 each coordinate a divalent metal cation. The important for dimerization stretch occupies residues 239-274; it reads YVEFNLVYDRGTLFGLQSGGRAESILMSLPPRVRWE. Residue 257–259 participates in substrate binding; the sequence is GGR.

It belongs to the aerobic coproporphyrinogen-III oxidase family. In terms of assembly, homodimer. A divalent metal cation serves as cofactor.

It localises to the cytoplasm. It catalyses the reaction coproporphyrinogen III + O2 + 2 H(+) = protoporphyrinogen IX + 2 CO2 + 2 H2O. Its pathway is porphyrin-containing compound metabolism; protoporphyrin-IX biosynthesis; protoporphyrinogen-IX from coproporphyrinogen-III (O2 route): step 1/1. In terms of biological role, involved in the heme biosynthesis. Catalyzes the aerobic oxidative decarboxylation of propionate groups of rings A and B of coproporphyrinogen-III to yield the vinyl groups in protoporphyrinogen-IX. This Xanthomonas axonopodis pv. citri (strain 306) protein is Oxygen-dependent coproporphyrinogen-III oxidase.